Reading from the N-terminus, the 433-residue chain is Methylenetetrahydrofolate--tRNA-(uracil-5-)-methyltransferase TrmFO (433 aa).

G7–G12 contacts FAD.

It belongs to the MnmG family. TrmFO subfamily. The cofactor is FAD.

The protein localises to the cytoplasm. It catalyses the reaction uridine(54) in tRNA + (6R)-5,10-methylene-5,6,7,8-tetrahydrofolate + NADH + H(+) = 5-methyluridine(54) in tRNA + (6S)-5,6,7,8-tetrahydrofolate + NAD(+). It carries out the reaction uridine(54) in tRNA + (6R)-5,10-methylene-5,6,7,8-tetrahydrofolate + NADPH + H(+) = 5-methyluridine(54) in tRNA + (6S)-5,6,7,8-tetrahydrofolate + NADP(+). Catalyzes the folate-dependent formation of 5-methyl-uridine at position 54 (M-5-U54) in all tRNAs. The polypeptide is Methylenetetrahydrofolate--tRNA-(uracil-5-)-methyltransferase TrmFO (Natranaerobius thermophilus (strain ATCC BAA-1301 / DSM 18059 / JW/NM-WN-LF)).